The chain runs to 295 residues: bZIP transcription factor 60 (295 aa).

The disordered stretch occupies residues 101 to 154; that stretch reads PAAADDSGKENSDLVVEKKSNDSGSEIHDDDDEEGDDDAVAKKRRRRVRNRDAA. Positions 106-127 are enriched in basic and acidic residues; it reads DSGKENSDLVVEKKSNDSGSEI. Acidic residues predominate over residues 128–138; the sequence is HDDDDEEGDDD. The bZIP domain occupies 140 to 203; the sequence is VAKKRRRRVR…QSLRYCLQKG (64 aa). A basic motif region spans residues 142 to 162; that stretch reads KKRRRRVRNRDAAVRSRERKK. The tract at residues 168-182 is leucine-zipper; sequence LEKKSKYLERECLRL. Residues 224–244 form a helical membrane-spanning segment; that stretch reads LLLGSLLWLLGVNFICLFPYM.

The protein belongs to the bZIP family. In terms of assembly, interacts with BZIP28. As to expression, expressed in seedlings, rosette and cauline leaves, stems, buds, flowers, siliques, immature seeds, anthers and pollen grains.

It localises to the endoplasmic reticulum membrane. The protein resides in the nucleus. Its function is as follows. Transcription factor involved in the unfolded protein response (UPR). Acts during endoplasmic reticulum stress (ER) by activating unfolded protein response (UPR) target genes via direct binding to the UPR element (UPRE). Plays a role in plant immunity and abiotic stress responses. This Arabidopsis thaliana (Mouse-ear cress) protein is bZIP transcription factor 60.